The primary structure comprises 287 residues: Ethanolamine ammonia-lyase small subunit (287 aa).

The adenosylcob(III)alamin site is built by Val-168, Glu-189, and Cys-218.

It belongs to the EutC family. The basic unit is a heterodimer which dimerizes to form tetramers. The heterotetramers trimerize; 6 large subunits form a core ring with 6 small subunits projecting outwards. The cofactor is adenosylcob(III)alamin.

The protein localises to the bacterial microcompartment. It carries out the reaction ethanolamine = acetaldehyde + NH4(+). The protein operates within amine and polyamine degradation; ethanolamine degradation. Catalyzes the deamination of various vicinal amino-alcohols to oxo compounds. Allows this organism to utilize ethanolamine as the sole source of nitrogen and carbon in the presence of external vitamin B12. In Pseudomonas syringae pv. tomato (strain ATCC BAA-871 / DC3000), this protein is Ethanolamine ammonia-lyase small subunit.